Consider the following 426-residue polypeptide: Lipoyl synthase, mitochondrial (426 aa).

Residues 1 to 29 constitute a mitochondrion transit peptide; it reads MASPAPLQRLQAPLRRSLARAAVLSSRTY. Over residues 27–42 the composition is skewed to polar residues; that stretch reads RTYATIPSPSDPGLTQ. The interval 27–61 is disordered; the sequence is RTYATIPSPSDPGLTQSSPSPAASTTPAKKAPRPS. Positions 43–55 are enriched in low complexity; sequence SSPSPAASTTPAK. [4Fe-4S] cluster is bound by residues Cys-140, Cys-145, Cys-151, Cys-171, Cys-175, Cys-178, and Ser-388. A Radical SAM core domain is found at 154–377; that stretch reads GNDKSAATAT…KQRALDMGFL (224 aa).

This sequence belongs to the radical SAM superfamily. Lipoyl synthase family. The cofactor is [4Fe-4S] cluster.

The protein localises to the mitochondrion. It carries out the reaction [[Fe-S] cluster scaffold protein carrying a second [4Fe-4S](2+) cluster] + N(6)-octanoyl-L-lysyl-[protein] + 2 oxidized [2Fe-2S]-[ferredoxin] + 2 S-adenosyl-L-methionine + 4 H(+) = [[Fe-S] cluster scaffold protein] + N(6)-[(R)-dihydrolipoyl]-L-lysyl-[protein] + 4 Fe(3+) + 2 hydrogen sulfide + 2 5'-deoxyadenosine + 2 L-methionine + 2 reduced [2Fe-2S]-[ferredoxin]. It participates in protein modification; protein lipoylation via endogenous pathway; protein N(6)-(lipoyl)lysine from octanoyl-[acyl-carrier-protein]: step 2/2. In terms of biological role, catalyzes the radical-mediated insertion of two sulfur atoms into the C-6 and C-8 positions of the octanoyl moiety bound to the lipoyl domains of lipoate-dependent enzymes, thereby converting the octanoylated domains into lipoylated derivatives. The polypeptide is Lipoyl synthase, mitochondrial (Podospora anserina (strain S / ATCC MYA-4624 / DSM 980 / FGSC 10383) (Pleurage anserina)).